Here is a 184-residue protein sequence, read N- to C-terminus: Glutathione-regulated potassium-efflux system ancillary protein KefG (184 aa).

The protein belongs to the NAD(P)H dehydrogenase (quinone) family. KefG subfamily. Interacts with KefB.

It localises to the cell inner membrane. The catalysed reaction is a quinone + NADH + H(+) = a quinol + NAD(+). It carries out the reaction a quinone + NADPH + H(+) = a quinol + NADP(+). Its function is as follows. Regulatory subunit of a potassium efflux system that confers protection against electrophiles. Required for full activity of KefB. This is Glutathione-regulated potassium-efflux system ancillary protein KefG from Escherichia coli O8 (strain IAI1).